Here is a 243-residue protein sequence, read N- to C-terminus: NADH-ubiquinone oxidoreductase chain 6 (243 aa).

The next 5 helical transmembrane spans lie at 16–36 (ISSV…SVIV), 41–61 (IISV…LILL), 69–89 (AYLI…LMLI), 104–124 (IPLT…LLPY), and 201–221 (IWLF…IVII).

This sequence belongs to the complex I subunit 6 family.

The protein localises to the mitochondrion membrane. It carries out the reaction a ubiquinone + NADH + 5 H(+)(in) = a ubiquinol + NAD(+) + 4 H(+)(out). Its function is as follows. Core subunit of the mitochondrial membrane respiratory chain NADH dehydrogenase (Complex I) that is believed to belong to the minimal assembly required for catalysis. Complex I functions in the transfer of electrons from NADH to the respiratory chain. The immediate electron acceptor for the enzyme is believed to be ubiquinone. This chain is NADH-ubiquinone oxidoreductase chain 6 (ndh-6), found in Neurospora crassa (strain ATCC 24698 / 74-OR23-1A / CBS 708.71 / DSM 1257 / FGSC 987).